The sequence spans 69 residues: Fungal defensin oryzeasin (69 aa).

Residues 1-18 (MKLLTVAFSLLLLGQVHA) form the signal peptide. Positions 19-26 (SPLVLDKR) are excised as a propeptide. 3 disulfides stabilise this stretch: Cys-29/Cys-60, Cys-44/Cys-66, and Cys-48/Cys-68.

It belongs to the invertebrate defensin family.

It is found in the secreted. The protein resides in the target cell membrane. Functionally, shows antibacterial activity against numerous Gram-positive bacteria. It selectively inhibits peptidoglycan biosynthesis through complex formation with the cell wall precursor lipid II (1:1 molar ratio) thus inhibiting cell wall synthesis. The sequence is that of Fungal defensin oryzeasin from Aspergillus oryzae (strain ATCC 42149 / RIB 40) (Yellow koji mold).